An 87-amino-acid polypeptide reads, in one-letter code: U15-lycotoxin-Ls1f (87 aa).

Positions 1–20 (MNSKIFAVLLLLGLLSCVLS) are cleaved as a signal peptide. One can recognise a WAP domain in the interval 21-66 (DQYCPKSSITACKKMNIRNDCCKDDDCTGGSWCCATPCGNFCKYPT). 5 disulfide bridges follow: Cys24-Cys54, Cys32-Cys58, Cys41-Cys53, Cys42-Cys80, and Cys47-Cys62.

Belongs to the venom protein 11 family. 01 (wap-1) subfamily. In terms of processing, contains 5 disulfide bonds. As to expression, expressed by the venom gland.

Its subcellular location is the secreted. Has antibacterial activity. The protein is U15-lycotoxin-Ls1f of Lycosa singoriensis (Wolf spider).